Here is a 226-residue protein sequence, read N- to C-terminus: tRNA (guanine-N(7)-)-methyltransferase (226 aa).

E59, E84, D111, and D134 together coordinate S-adenosyl-L-methionine. The active site involves D134. K138 serves as a coordination point for substrate. The interval 140 to 145 (RHNKRR) is interaction with RNA. Residues D170 and 205–208 (TKFE) each bind substrate.

The protein belongs to the class I-like SAM-binding methyltransferase superfamily. TrmB family.

The enzyme catalyses guanosine(46) in tRNA + S-adenosyl-L-methionine = N(7)-methylguanosine(46) in tRNA + S-adenosyl-L-homocysteine. Its pathway is tRNA modification; N(7)-methylguanine-tRNA biosynthesis. Functionally, catalyzes the formation of N(7)-methylguanine at position 46 (m7G46) in tRNA. This Chromobacterium violaceum (strain ATCC 12472 / DSM 30191 / JCM 1249 / CCUG 213 / NBRC 12614 / NCIMB 9131 / NCTC 9757 / MK) protein is tRNA (guanine-N(7)-)-methyltransferase.